Reading from the N-terminus, the 231-residue chain is Probable tetraspanin tspE (231 aa).

The Cytoplasmic segment spans residues 1–21; sequence MTFVDNFEFNQNTPRLVRGPF. A helical membrane pass occupies residues 22–42; it reads IILNSIIFSLSFILLCSTGII. Topologically, residues 43 to 58 are extracellular; it reads IYYLNEYYLVKDLTIP. A helical membrane pass occupies residues 59–79; that stretch reads LGSFILSAYMVITTIVGGIAI. The Cytoplasmic portion of the chain corresponds to 80 to 83; it reads WKKK. The helical transmembrane segment at 84–104 threads the bilayer; the sequence is LGLHLTFMVFLVVLIVCLVGV. The Extracellular portion of the chain corresponds to 105–195; it reads SAKMIVDSGN…VESILKYLGY (91 aa). A helical membrane pass occupies residues 196–216; sequence YGIVLSVIELILLILSGFFLL. The Cytoplasmic portion of the chain corresponds to 217–231; it reads KTNKNVKSKSFILQD.

This sequence belongs to the tetraspanin (TM4SF) family.

The protein localises to the membrane. The chain is Probable tetraspanin tspE (tspE) from Dictyostelium discoideum (Social amoeba).